The following is a 391-amino-acid chain: MDNVGCEASSSRDPKGKKAVGFSPKLRVDKDCARWGNENVEEQTIGTQPTWRNHQHQTSRIRGFICATIIFVVCLGALSYIYRVDVSTTMLSTNQMNESHTAQCKNPPTRREWRGLTTGEKQEFTRSVNCLSRVPSKWGLNGTLYDDFSALHGGIGSWSHRSSSFLPWHRNALYVWEAALREHCGFNGQIPYWDWTMDWMNLANSSIWDSTEGFGGDGEVGGPITVGEGRCVVDGPFTDLRPIKYNHTYVQHCLSRGFRDNGTLGHMSGLPFRPEIIGEVRRKETFVDFEAAVEMHLHNAMHLAISGDFLALTAANDPIFYVHHAQMDHLWWQWQQENRERRLFEYNGKHMHNSTGHDASLDSMLVYGGFTEDIPVSEVMDTEKGKLCYRY.

The disordered stretch occupies residues 1 to 21; the sequence is MDNVGCEASSSRDPKGKKAVG. Residues 61 to 81 form a helical membrane-spanning segment; that stretch reads IRGFICATIIFVVCLGALSYI. N-linked (GlcNAc...) asparagine glycosylation is found at asparagine 97 and asparagine 141. Cu cation-binding residues include histidine 160 and histidine 169. 3 N-linked (GlcNAc...) asparagine glycosylation sites follow: asparagine 204, asparagine 246, and asparagine 261. Residues histidine 298 and histidine 324 each contribute to the Cu cation site. N-linked (GlcNAc...) asparagine glycosylation occurs at asparagine 353.

This sequence belongs to the tyrosinase family. Requires Cu(2+) as cofactor.

It is found in the membrane. It functions in the pathway mycotoxin biosynthesis. Functionally, tyrosinase-like protein; part of the gene cluster that mediates the biosynthesis of the phomopsins, a group of hexapeptide mycotoxins which infects lupins and causes lupinosis disease in livestock. Within the pathway, phomQ2 is involved in the generation of the common 13-membered macrocycle, possibly by catalyzing the hydroxylation of Tyr. The pathway starts with the processing of the precursor phomA by several endopeptidases including kexin proteases as well as the cluster-specific S41 family peptidase phomP1 and the oligopeptidase phomG to produce 10 identical copies of the hexapeptide Tyr-Val-Ile-Pro-Ile-Asp. After being excised from the precursor peptide, the core peptides are cyclized and modified post-translationally by enzymes encoded within the gene cluster. The timing and order of proteolysis of the phomA precursor and PTMs are still unknown. Two tyrosinase-like enzymes, phomQ1 and phomQ2, catalyze the chlorination and hydroxylation of Tyr, respectively. PhomYb, is proposed to be involved in the construction of the macrocyclic structure. The other 4 ustYa family proteins may be involved in PTMs that generate the unique structure of phomopsin A. PhomYa is required for the hydroxylation of C-beta of Tyr. PhomYc, phomYd, and phomYe are responsible for the biosynthesis of 2,3-dehydroisoleucine (dIle), 2,3-dehydroaspartic acid (dAsp), and 3,4-dehydroproline (dPro), respectively. While dIle formation by phomYc is indispensable for the installation of dAsp by phomYd, the order of the other PTMs have not been elucidated yet. Most of the biosynthetic enzymes likely have broad substrate specificity, and thus, there might be a metabolic grid from a precursor to phomopsin A. The enzyme(s) responsible for the biosynthesis of 3,4-dehydrovaline (dVal) have also not been identified yet. Finally, phomM acts as an S-adenosylmethionine-dependent alpha-N-methyltransferase that catalyzes two successive N-methylation reactions, converting N-desmethyl-phomopsin A to phomopsin A and phomopsin A further to an N,N-dimethylated congener called phomopsin E. This is Tyrosinase-like protein phomQ2 from Diaporthe leptostromiformis (Lupinosis disease fungus).